A 348-amino-acid polypeptide reads, in one-letter code: Capsid protein (348 aa).

Residues 58 to 84 (TPRRPRMTNSPPRTSRNSPGQAGKSMT) form a disordered region. Polar residues predominate over residues 64 to 84 (MTNSPPRTSRNSPGQAGKSMT). The segment at 82-239 (SMTMSKTELL…ELFIQYTIVL (158 aa)) is s domain, virion shell. The p domain, projecting stretch occupies residues 240–348 (SDPTKTAKIS…QPLKVVVYRM (109 aa)).

This sequence belongs to the icosahedral plant coat protein family. As to quaternary structure, homodimer. Homomultimer. The cofactor is Ca(2+).

The protein resides in the virion. Its function is as follows. Capsid protein self-assembles to form an icosahedral capsid with a T=3 symmetry, about 32-35 nm in diameter, and consisting of 180 capsid proteins. Also acts as a suppressor of RNA-mediated gene silencing, also known as post-transcriptional gene silencing (PTGS), a mechanism of plant viral defense that limits the accumulation of viral RNAs. In Carnation mottle virus (isolate China/Shanghai) (CarMV), this protein is Capsid protein.